The primary structure comprises 277 residues: MIOREX complex component 2 (277 aa).

Belongs to the NAD(P)-dependent epimerase/dehydratase family. As to quaternary structure, associates with the mitochondrial ribosome. Component of a multi-subunit COQ enzyme complex.

The protein localises to the mitochondrion. It participates in cofactor biosynthesis; ubiquinone biosynthesis. Functionally, component of MIOREX complexes, large expressome-like assemblies of ribosomes with factors involved in all the steps of post-transcriptional gene expression. Component of a multi-subunit COQ enzyme complex required for coenzyme Q biosynthesis. This Saccharomyces cerevisiae (strain ATCC 204508 / S288c) (Baker's yeast) protein is MIOREX complex component 2.